Reading from the N-terminus, the 521-residue chain is Vang-like protein 2-A (521 aa).

Residues 1-81 (MDNDSQYSGY…TTVVTGTSEH (81 aa)) form a disordered region. The Cytoplasmic segment spans residues 1–108 (MDNDSQYSGY…AKLDCSRHLG (108 aa)). Residues 15–33 (GHSRSSRKHRDRRERHRSK) show a composition bias toward basic residues. Positions 57-67 (ESTRGEDRDDN) are enriched in basic and acidic residues. The span at 69 to 81 (GETTTVVTGTSEH) shows a compositional bias: low complexity. The chain crosses the membrane as a helical span at residues 109–129 (VVIGGALALLSFLTPIAFMLL). Residues 130–147 (PQILWREDLEQCGTACEG) lie on the Extracellular side of the membrane. The helical transmembrane segment at 148-168 (LFISVAFKLLILLLGSWALFF) threads the bilayer. Residues 169 to 178 (RRPKAFFPRV) are Cytoplasmic-facing. Residues 179–199 (FVFRALLMVLVFLLVVSYWLF) traverse the membrane as a helical segment. Topologically, residues 200–218 (YGVRILESRDKNYQGIVQY) are extracellular. The chain crosses the membrane as a helical span at residues 219 to 239 (AVSLVDALLFVHYLAVVLLEL). Over 240-521 (RQLQPQFTIK…VMRLQSETSV (282 aa)) the chain is Cytoplasmic. The PDZ-binding signature appears at 518–521 (ETSV).

The protein belongs to the Vang family. In terms of assembly, interacts with dvl/dsh. Interacts with prickle3. As to expression, during gastrulation, broadly expressed throughout the marginal zone and animal cap region. From the neurula stages, expression becomes concentrated in neural tissues, in the neural plate and neural tube.

Its subcellular location is the cell membrane. Has a role in non-canonical Wnt/planar cell polarity (PCP) signaling; can recruit dvl/dsh and prickle from the cytoplasm to the plasma membrane. Acts in a PCP complex to regulate the polarized assembly of fibronectrin on the surface of the mesoderm during gastrulation. Regulates convergent extension cell movements in both dorsal mesoderm and neural tissue during gastrulation, without affecting cell fate. Regulates neural fold closure during neurulation. May be required for cell surface localization of fzd3 and fzd6 in the inner ear. This is Vang-like protein 2-A (vangl2-a) from Xenopus laevis (African clawed frog).